Reading from the N-terminus, the 650-residue chain is Threonine--tRNA ligase (650 aa).

Positions 5–67 (NKSMFIKLKD…QEGDQVILWG (63 aa)) constitute a TGS domain. Residues 246–537 (DHKLLGAKLD…LIEHYVGKFP (292 aa)) are catalytic. Positions 337, 388, and 514 each coordinate Zn(2+).

Belongs to the class-II aminoacyl-tRNA synthetase family. In terms of assembly, homodimer. It depends on Zn(2+) as a cofactor.

Its subcellular location is the cytoplasm. It carries out the reaction tRNA(Thr) + L-threonine + ATP = L-threonyl-tRNA(Thr) + AMP + diphosphate + H(+). Catalyzes the attachment of threonine to tRNA(Thr) in a two-step reaction: L-threonine is first activated by ATP to form Thr-AMP and then transferred to the acceptor end of tRNA(Thr). Also edits incorrectly charged L-seryl-tRNA(Thr). The chain is Threonine--tRNA ligase from Protochlamydia amoebophila (strain UWE25).